We begin with the raw amino-acid sequence, 203 residues long: Ras-related protein Rab5A (203 aa).

18-26 is a binding site for GTP; it reads GDVGTGKSS. The Effector region motif lies at 40-48; that stretch reads QESTIGAAF. Residues 66 to 70, 124 to 127, and 154 to 155 each bind GTP; these read DTAGQ, NKAD, and SA. S-geranylgeranyl cysteine attachment occurs at residues cysteine 201 and cysteine 202.

It belongs to the small GTPase superfamily. Rab family. As to quaternary structure, interacts with VPS9A. Interacts with NSF and RBP-L. In terms of tissue distribution, highly expressed in roots. Expressed at low levels in shoots, flowers and grains.

It localises to the prevacuolar compartment membrane. Its subcellular location is the golgi apparatus membrane. It is found in the cell membrane. The protein localises to the protein storage vacuole membrane. Functionally, plays an important role in intracellular trafficking of seed storage proteins to the protein storage vacuoles (PSVs). Participates in the transport of the proglutelins from the Golgi apparatus to the PSVs in endosperm. Functions cooperatively with VPS9A to regulate post-Golgi dense vesicle-mediated transport of storage proteins to the type II protein bodies (PBII) protein storage vacuoles in developing endosperm. Involved in the maintenance of the general structural organization of the endomembrane system in developing endosperm. Binds GTP in vitro. Forms a quaternary complex with the two glutelin zipcode RNA-binding proteins RBP-L and RBP-P, and the membrane trafficking factor NSF. This quaternay complex carries glutelin mRNAs for active transport on endosomes to the cortical endoplasmic reticulum membrane, and enables endosome-mediated glutelin mRNA transport in endosperm cells. The chain is Ras-related protein Rab5A from Oryza sativa subsp. japonica (Rice).